The following is a 143-amino-acid chain: Large ribosomal subunit protein uL11 (143 aa).

The protein belongs to the universal ribosomal protein uL11 family. Part of the ribosomal stalk of the 50S ribosomal subunit. Interacts with L10 and the large rRNA to form the base of the stalk. L10 forms an elongated spine to which L12 dimers bind in a sequential fashion forming a multimeric L10(L12)X complex. Post-translationally, one or more lysine residues are methylated.

Forms part of the ribosomal stalk which helps the ribosome interact with GTP-bound translation factors. The protein is Large ribosomal subunit protein uL11 of Variovorax paradoxus (strain S110).